Here is a 475-residue protein sequence, read N- to C-terminus: Cytosolic non-specific dipeptidase (475 aa).

At A2 the chain carries N-acetylalanine. An N6-acetyllysine modification is found at K9. A Phosphoserine modification is found at S58. H99 serves as a coordination point for Mn(2+). D101 is a catalytic residue. Mn(2+) is bound at residue D132. Residue E166 is the Proton acceptor of the active site. Residues 166-167, D195, and H228 each bind substrate; that span reads EE. Positions 167 and 195 each coordinate Mn(2+). Phosphoserine is present on S299. T330, R343, S417, and H445 together coordinate substrate. A Mn(2+)-binding site is contributed by H445.

It belongs to the peptidase M20A family. As to quaternary structure, homodimer. It depends on Mn(2+) as a cofactor.

Its subcellular location is the cytoplasm. The enzyme catalyses Hydrolysis of dipeptides, preferentially hydrophobic dipeptides including prolyl amino acids.. The catalysed reaction is L-threonyl-L-threonine + H2O = 2 L-threonine. It catalyses the reaction L-threonyl-L-serine + H2O = L-threonine + L-serine. It carries out the reaction L-seryl-L-threonine + H2O = L-threonine + L-serine. The enzyme catalyses L-cysteinylglycine + H2O = L-cysteine + glycine. The catalysed reaction is (S)-lactate + L-phenylalanine = N-[(S)-lactoyl]-L-phenylalanine + H2O. In terms of biological role, catalyzes the peptide bond hydrolysis in dipeptides, displaying a non-redundant activity toward threonyl dipeptides. Mediates threonyl dipeptide catabolism in a tissue-specific way. Has high dipeptidase activity toward cysteinylglycine, an intermediate metabolite in glutathione metabolism. Metabolizes N-lactoyl-amino acids, both through hydrolysis to form lactic acid and amino acids, as well as through their formation by reverse proteolysis. Plays a role in the regulation of cell cycle arrest and apoptosis. The protein is Cytosolic non-specific dipeptidase (CNDP2) of Pongo abelii (Sumatran orangutan).